A 78-amino-acid chain; its full sequence is Large ribosomal subunit protein bL28 (78 aa).

Residues 1–22 (MAKVCQVTGKRPVTGHNVSHAK) are disordered.

This sequence belongs to the bacterial ribosomal protein bL28 family.

The polypeptide is Large ribosomal subunit protein bL28 (Teredinibacter turnerae (strain ATCC 39867 / T7901)).